A 315-amino-acid chain; its full sequence is Methionyl-tRNA formyltransferase (315 aa).

Position 113 to 116 (113 to 116 (SLLP)) interacts with (6S)-5,6,7,8-tetrahydrofolate.

It belongs to the Fmt family.

It carries out the reaction L-methionyl-tRNA(fMet) + (6R)-10-formyltetrahydrofolate = N-formyl-L-methionyl-tRNA(fMet) + (6S)-5,6,7,8-tetrahydrofolate + H(+). Functionally, attaches a formyl group to the free amino group of methionyl-tRNA(fMet). The formyl group appears to play a dual role in the initiator identity of N-formylmethionyl-tRNA by promoting its recognition by IF2 and preventing the misappropriation of this tRNA by the elongation apparatus. This chain is Methionyl-tRNA formyltransferase, found in Cronobacter sakazakii (strain ATCC BAA-894) (Enterobacter sakazakii).